An 84-amino-acid chain; its full sequence is UPF0457 protein BC_3525 (84 aa).

This sequence belongs to the UPF0457 family.

The chain is UPF0457 protein BC_3525 from Bacillus cereus (strain ATCC 14579 / DSM 31 / CCUG 7414 / JCM 2152 / NBRC 15305 / NCIMB 9373 / NCTC 2599 / NRRL B-3711).